Consider the following 334-residue polypeptide: Spermatogenesis-associated protein 32 (334 aa).

The tract at residues Ser-24–Arg-98 is disordered. A compositionally biased stretch (acidic residues) spans Glu-37–Ala-47. The segment covering Glu-48–Pro-60 has biased composition (basic and acidic residues). Residues Ser-77 to Arg-98 show a composition bias toward polar residues. Phosphoserine occurs at positions 135 and 138.

Interacts with syntaxin-1 and ACTB. Highly expressed in the testis and weakly in the brain and heart.

This chain is Spermatogenesis-associated protein 32 (Spata32), found in Mus musculus (Mouse).